A 277-amino-acid polypeptide reads, in one-letter code: Phosphatidylglycerol--prolipoprotein diacylglyceryl transferase (277 aa).

4 helical membrane passes run Ile-18–Ala-38, Ile-51–Tyr-71, Ile-89–Ile-109, and Ile-116–Gly-136. A 1,2-diacyl-sn-glycero-3-phospho-(1'-sn-glycerol) is bound at residue Arg-137. The next 3 helical transmembrane spans lie at Gln-177–Ile-197, Gly-205–Met-225, and Phe-235–Tyr-255.

It belongs to the Lgt family.

Its subcellular location is the cell membrane. The catalysed reaction is L-cysteinyl-[prolipoprotein] + a 1,2-diacyl-sn-glycero-3-phospho-(1'-sn-glycerol) = an S-1,2-diacyl-sn-glyceryl-L-cysteinyl-[prolipoprotein] + sn-glycerol 1-phosphate + H(+). It participates in protein modification; lipoprotein biosynthesis (diacylglyceryl transfer). Its function is as follows. Catalyzes the transfer of the diacylglyceryl group from phosphatidylglycerol to the sulfhydryl group of the N-terminal cysteine of a prolipoprotein, the first step in the formation of mature lipoproteins. The protein is Phosphatidylglycerol--prolipoprotein diacylglyceryl transferase of Listeria monocytogenes serotype 4b (strain CLIP80459).